The chain runs to 347 residues: MLYPLIRKFFFSLDAETAHGIGMKGIDLMNAAGLACAVAKPVAACPVEVMGLKFPNPVGLAAGLDKNGDHIDGLAKLGFGFIEIGTITPRPQDGNPKPRLFRIPEAQGIINRMGFNNAGVDKLLENVRAAEFPKKGGILGINIGKNATTPIEKAADDYLICLDKVYNDASYVTVNISSPNTKNLRELQKDEALDDLLAQLKAKQLQLAEQYGKYVPMALKIAPDLDDEQITAIADALRRHRFDAVIATNTTLSREGVEGMPNATETGGLSGKPVFEKSTAVQKKLSIALAGELPIIGVGGIMGGEDAAEKIRAGASLVQFYSGFIYRGPDLVSEVAETLAHVMRKSV.

FMN is bound by residues 62–66 (AGLDK) and threonine 86. Lysine 66 serves as a coordination point for substrate. Residue 111–115 (NRMGF) participates in substrate binding. FMN contacts are provided by asparagine 142 and asparagine 175. Asparagine 175 contacts substrate. The active-site Nucleophile is serine 178. Asparagine 180 is a substrate binding site. 2 residues coordinate FMN: lysine 220 and threonine 248. Position 249 to 250 (249 to 250 (NT)) interacts with substrate. FMN contacts are provided by residues glycine 271, glycine 300, and 321-322 (YS).

The protein belongs to the dihydroorotate dehydrogenase family. Type 2 subfamily. As to quaternary structure, monomer. The cofactor is FMN.

The protein localises to the cell membrane. The catalysed reaction is (S)-dihydroorotate + a quinone = orotate + a quinol. It participates in pyrimidine metabolism; UMP biosynthesis via de novo pathway; orotate from (S)-dihydroorotate (quinone route): step 1/1. Its function is as follows. Catalyzes the conversion of dihydroorotate to orotate with quinone as electron acceptor. This is Dihydroorotate dehydrogenase (quinone) from Dechloromonas aromatica (strain RCB).